The following is a 371-amino-acid chain: MPHHYILTMFGLLPVATNISTWWNFGSMLLSCLMLQVTTGFFLAVHYTANTNLAFSSIIHIMRDVPYGWMMQNTHAIGASLFFICIYIHIARGLYYGSYLNKKTWMSGTTLLITLMATAFFGYILPWGQMSFWAATVITNLLTAVPYLGTSLTIWLWGGFAINDPTLTRFFALHFILPFIIISLSSLHILLLHEEGSSNPLGTNSDTDKIPFHPYHTYKDLLLLTLLLTLLLLTTFFLPNIMNDPENFSKANPLVTPQHIKPEWYFLFAYGILRSIPNKLGGALALVASILIIMTMPFTHTAHVRSMTFRPMSQLMFWTLISTFMTITWAATKPVEPPFMMISQTASMIYFMFFISNPILGWMENKIMKTM.

4 consecutive transmembrane segments (helical) span residues 25–45, 69–90, 105–125, and 170–190; these read FGSM…FLAV, WMMQ…YIHI, WMSG…GYIL, and FFAL…LHIL. Positions 75 and 89 each coordinate heme b. Residues His174 and His188 each contribute to the heme b site. His193 contributes to the a ubiquinone binding site. 4 consecutive transmembrane segments (helical) span residues 218–238, 280–300, 312–332, and 339–358; these read YKDL…TFFL, LGGA…PFTH, MSQL…WAAT, and FMMI…ISNP.

Belongs to the cytochrome b family. As to quaternary structure, the cytochrome bc1 complex contains 3 respiratory subunits (MT-CYB, CYC1 and UQCRFS1), 2 core proteins (UQCRC1 and UQCRC2) and probably 6 low-molecular weight proteins. Heme b is required as a cofactor.

The protein localises to the mitochondrion inner membrane. In terms of biological role, component of the ubiquinol-cytochrome c reductase complex (complex III or cytochrome b-c1 complex) that is part of the mitochondrial respiratory chain. The b-c1 complex mediates electron transfer from ubiquinol to cytochrome c. Contributes to the generation of a proton gradient across the mitochondrial membrane that is then used for ATP synthesis. The chain is Cytochrome b (MT-CYB) from Casarea dussumieri (Round Island keel-scaled boa).